The chain runs to 71 residues: uncharacterized protein (71 aa).

The signal sequence occupies residues M1–T21.

This is an uncharacterized protein from Haemophilus influenzae (strain ATCC 51907 / DSM 11121 / KW20 / Rd).